The primary structure comprises 115 residues: uncharacterized protein (115 aa).

The next 3 helical transmembrane spans lie at 1-21 (MFLA…FGSW), 33-53 (ALAL…LAAG), and 54-74 (GVVA…VCIA).

To M.leprae ML0030.

The protein localises to the cell membrane. This is an uncharacterized protein from Mycobacterium tuberculosis (strain CDC 1551 / Oshkosh).